The primary structure comprises 121 residues: Cu-Zn superoxide dismutase-like protein (121 aa).

Cys48 and Cys98 form a disulfide bridge.

The protein belongs to the Cu-Zn superoxide dismutase family.

It localises to the host cytoplasm. Virion protein with no enzymatic activity. The protein is Cu-Zn superoxide dismutase-like protein of Vaccinia virus (strain Ankara) (VACV).